We begin with the raw amino-acid sequence, 332 residues long: 2,3-diketo-L-gulonate reductase (332 aa).

The active-site Proton donor is His-44. NAD(+) contacts are provided by residues 168–174, 224–225, and 304–306; these read ITMVDMS, WK, and GHE.

This sequence belongs to the LDH2/MDH2 oxidoreductase family. DlgD subfamily. Homodimer.

The protein resides in the cytoplasm. It catalyses the reaction 3-dehydro-L-gulonate + NAD(+) = 2,3-dioxo-L-gulonate + NADH + H(+). The catalysed reaction is 3-dehydro-L-gulonate + NADP(+) = 2,3-dioxo-L-gulonate + NADPH + H(+). Its function is as follows. Catalyzes the reduction of 2,3-diketo-L-gulonate in the presence of NADH, to form 3-keto-L-gulonate. This Klebsiella oxytoca protein is 2,3-diketo-L-gulonate reductase.